A 215-amino-acid chain; its full sequence is Probable GTP-binding protein EngB (215 aa).

Residues 26 to 200 (EGIEVAFAGR…RAKLDEWFAP (175 aa)) enclose the EngB-type G domain. Residues 34 to 41 (GRSNAGKS), 61 to 65 (GRTQL), 79 to 82 (DLPG), 146 to 149 (TKAD), and 179 to 181 (FSS) contribute to the GTP site. Residues Ser41 and Thr63 each contribute to the Mg(2+) site.

Belongs to the TRAFAC class TrmE-Era-EngA-EngB-Septin-like GTPase superfamily. EngB GTPase family. Mg(2+) serves as cofactor.

Functionally, necessary for normal cell division and for the maintenance of normal septation. This chain is Probable GTP-binding protein EngB, found in Aliivibrio fischeri (strain ATCC 700601 / ES114) (Vibrio fischeri).